Reading from the N-terminus, the 158-residue chain is Transcription elongation factor GreA (158 aa).

Residues 14–76 are a coiled coil; that stretch reads VKKLEEELEY…QIENMLKNAN (63 aa).

This sequence belongs to the GreA/GreB family.

In terms of biological role, necessary for efficient RNA polymerase transcription elongation past template-encoded arresting sites. The arresting sites in DNA have the property of trapping a certain fraction of elongating RNA polymerases that pass through, resulting in locked ternary complexes. Cleavage of the nascent transcript by cleavage factors such as GreA or GreB allows the resumption of elongation from the new 3'terminus. GreA releases sequences of 2 to 3 nucleotides. This chain is Transcription elongation factor GreA, found in Clostridium acetobutylicum (strain ATCC 824 / DSM 792 / JCM 1419 / IAM 19013 / LMG 5710 / NBRC 13948 / NRRL B-527 / VKM B-1787 / 2291 / W).